A 457-amino-acid polypeptide reads, in one-letter code: Siroheme synthase (457 aa).

The precorrin-2 dehydrogenase /sirohydrochlorin ferrochelatase stretch occupies residues methionine 1–threonine 204. NAD(+) is bound by residues aspartate 22 to valine 23 and leucine 43 to alanine 44. The residue at position 128 (serine 128) is a Phosphoserine. The uroporphyrinogen-III C-methyltransferase stretch occupies residues glycine 216–histidine 457. Proline 225 serves as a coordination point for S-adenosyl-L-methionine. The active-site Proton acceptor is the aspartate 248. Lysine 270 functions as the Proton donor in the catalytic mechanism. Residues glycine 301 to aspartate 303, isoleucine 306, threonine 331 to alanine 332, methionine 382, and glycine 411 contribute to the S-adenosyl-L-methionine site.

It in the N-terminal section; belongs to the precorrin-2 dehydrogenase / sirohydrochlorin ferrochelatase family. This sequence in the C-terminal section; belongs to the precorrin methyltransferase family.

The catalysed reaction is uroporphyrinogen III + 2 S-adenosyl-L-methionine = precorrin-2 + 2 S-adenosyl-L-homocysteine + H(+). It carries out the reaction precorrin-2 + NAD(+) = sirohydrochlorin + NADH + 2 H(+). The enzyme catalyses siroheme + 2 H(+) = sirohydrochlorin + Fe(2+). It participates in cofactor biosynthesis; adenosylcobalamin biosynthesis; precorrin-2 from uroporphyrinogen III: step 1/1. The protein operates within cofactor biosynthesis; adenosylcobalamin biosynthesis; sirohydrochlorin from precorrin-2: step 1/1. Its pathway is porphyrin-containing compound metabolism; siroheme biosynthesis; precorrin-2 from uroporphyrinogen III: step 1/1. It functions in the pathway porphyrin-containing compound metabolism; siroheme biosynthesis; siroheme from sirohydrochlorin: step 1/1. It participates in porphyrin-containing compound metabolism; siroheme biosynthesis; sirohydrochlorin from precorrin-2: step 1/1. Its function is as follows. Multifunctional enzyme that catalyzes the SAM-dependent methylations of uroporphyrinogen III at position C-2 and C-7 to form precorrin-2 via precorrin-1. Then it catalyzes the NAD-dependent ring dehydrogenation of precorrin-2 to yield sirohydrochlorin. Finally, it catalyzes the ferrochelation of sirohydrochlorin to yield siroheme. This is Siroheme synthase from Shigella dysenteriae serotype 1 (strain Sd197).